We begin with the raw amino-acid sequence, 767 residues long: Phosphoribosylformylglycinamidine synthase subunit PurL (767 aa).

Residue His-46 is part of the active site. Residues Tyr-49 and Lys-88 each coordinate ATP. Residue Glu-90 coordinates Mg(2+). Residues 91-94 (SHNH) and Arg-113 contribute to the substrate site. Residue His-92 is the Proton acceptor of the active site. Residue Asp-114 participates in Mg(2+) binding. Residue Gln-237 participates in substrate binding. Mg(2+) is bound at residue Asp-265. A substrate-binding site is contributed by 309 to 311 (ESQ). Residues Asp-498 and Gly-535 each contribute to the ATP site. Asn-536 provides a ligand contact to Mg(2+). Ser-538 is a binding site for substrate.

The protein belongs to the FGAMS family. Monomer. Part of the FGAM synthase complex composed of 1 PurL, 1 PurQ and 2 PurS subunits.

It is found in the cytoplasm. The catalysed reaction is N(2)-formyl-N(1)-(5-phospho-beta-D-ribosyl)glycinamide + L-glutamine + ATP + H2O = 2-formamido-N(1)-(5-O-phospho-beta-D-ribosyl)acetamidine + L-glutamate + ADP + phosphate + H(+). Its pathway is purine metabolism; IMP biosynthesis via de novo pathway; 5-amino-1-(5-phospho-D-ribosyl)imidazole from N(2)-formyl-N(1)-(5-phospho-D-ribosyl)glycinamide: step 1/2. Functionally, part of the phosphoribosylformylglycinamidine synthase complex involved in the purines biosynthetic pathway. Catalyzes the ATP-dependent conversion of formylglycinamide ribonucleotide (FGAR) and glutamine to yield formylglycinamidine ribonucleotide (FGAM) and glutamate. The FGAM synthase complex is composed of three subunits. PurQ produces an ammonia molecule by converting glutamine to glutamate. PurL transfers the ammonia molecule to FGAR to form FGAM in an ATP-dependent manner. PurS interacts with PurQ and PurL and is thought to assist in the transfer of the ammonia molecule from PurQ to PurL. The polypeptide is Phosphoribosylformylglycinamidine synthase subunit PurL (Anaeromyxobacter sp. (strain Fw109-5)).